We begin with the raw amino-acid sequence, 582 residues long: MEALSRAGQEMSLAALKQHDPYITSIADLTGQVALYTFCPKANQWEKTDIEGTLFVYRRSASPYHGFTIVNRLNMHNLVEPVNKDLEFQLHEPFLLYRNASLSIYSIWFYDKNDCHRIAKLMADVVEEETRRSQQAARDKQSPSQANGCSDHRPIDILEMLSRAKDEYERNQMGDSNISSPGLQPSTQLSNLGSTETLEEMPSGSQDKSAPSGHKHLTVEELFGTSLPKEQPAVVGLDSEEMERLPGDASQKEPNSFLPFPFEQLGGAPQSETLGVPSAAHHSVQPEITTPVLITPASITQSNEKHAPTYTIPLSPVLSPTLPAEAPTAQVPPSLPRNSTMMQAVKTTPRQRSPLLNQPVPELSHASLIANQSPFRAPLNVTNTAGTSLPSVDLLQKLRLTPQHDQIQTQPLGKGAMVASFSPAAGQLATPESFIEPPSKTAAARVAASASLSNMVLAPLQSMQQNQDPEVFVQPKVLSSAIPVAGAPLVTATTTAVSSVLLAPSVFQQTVTRSSDLERKASSPSPLTIGTPESQRKPSIILSKSQLQDTLIHLIKNDSSFLSTLHEVYLQVLTKNKDNHNL.

S62 bears the Phosphoserine mark. Residues 132 to 141 show a composition bias toward basic and acidic residues; sequence RSQQAARDKQ. Disordered regions lie at residues 132–154 and 172–214; these read RSQQ…DHRP and QMGD…PSGH. A phosphoserine mark is found at S142, S179, S180, S315, S319, and S334. The segment covering 173 to 196 has biased composition (polar residues); sequence MGDSNISSPGLQPSTQLSNLGSTE. T348 is modified (phosphothreonine). Phosphoserine is present on S353. R376 is subject to Asymmetric dimethylarginine. A Phosphothreonine modification is found at T401. 4 positions are modified to phosphoserine: S422, S522, S523, and S525. The disordered stretch occupies residues 513–536; that stretch reads RSSDLERKASSPSPLTIGTPESQR. Over residues 522–533 the composition is skewed to polar residues; it reads SSPSPLTIGTPE. A phosphothreonine mark is found at T528 and T531.

Belongs to the DCP1 family. In terms of assembly, (Microbial infection) Interacts with rotavirus A non-structural protein 2; this interaction probably plays a role in the sequestration of DCP1A in viral factories. Interacts with rotavirus A non-structural protein 5; this interaction probably plays a role in its sequestration in viral factories. As to quaternary structure, forms a complex with EDC3, DCP2, DDX6 and EDC4/HEDLS, within this complex directly interacts with EDC3. Part of a cytoplasmic complex containing proteins involved in mRNA decay, including XRN1 and LSM1. Interacts with DCP1B. Interacts with DCP2. Interacts with DDX17 in an RNA-independent manner. Interacts with PNRC2. Interacts with SMAD4. Interacts with UPF1. Interacts with ZC3HAV1. Interacts with ZFP36L1. Interacts with NBDY. Interacts with DHX34; the interaction is RNA-independent. Detected in heart, brain, placenta, lung, skeletal muscle, liver, kidney and pancreas.

The protein localises to the cytoplasm. It localises to the P-body. It is found in the nucleus. The catalysed reaction is a 5'-end (N(7)-methyl 5'-triphosphoguanosine)-ribonucleoside in mRNA + H2O = N(7)-methyl-GDP + a 5'-end phospho-ribonucleoside in mRNA + 2 H(+). Functionally, necessary for the degradation of mRNAs, both in normal mRNA turnover and in nonsense-mediated mRNA decay. Removes the 7-methyl guanine cap structure from mRNA molecules, yielding a 5'-phosphorylated mRNA fragment and 7m-GDP. Contributes to the transactivation of target genes after stimulation by TGFB1. Essential for embryonic development. This is mRNA-decapping enzyme 1A (DCP1A) from Homo sapiens (Human).